The sequence spans 389 residues: Nucleic acid dioxygenase ALKBH1 (389 aa).

The interval 86–389 is tRNA-binding; that stretch reads SKWQAYGLKG…VKRARINPDS (304 aa). Substrate contacts are provided by residues Trp-144 and 175–177; that span reads YHY. The Fe2OG dioxygenase domain maps to 208-347; that stretch reads GFEDFRAEAG…RVNMTVRQVL (140 aa). 220–222 lines the 2-oxoglutarate pocket; the sequence is NYY. Positions 231, 233, and 287 each coordinate Fe cation. Asp-233 is a binding site for substrate. 338–344 is a binding site for 2-oxoglutarate; it reads RVNMTVR.

This sequence belongs to the alkB family. Monomer. Interacts with DNAJB6. Fe(2+) serves as cofactor. In terms of tissue distribution, ubiquitous.

It is found in the nucleus. Its subcellular location is the mitochondrion. The catalysed reaction is 2'-deoxyribonucleotide-(2'-deoxyribose 5'-phosphate)-2'-deoxyribonucleotide-DNA = a 3'-end 2'-deoxyribonucleotide-(2,3-dehydro-2,3-deoxyribose 5'-phosphate)-DNA + a 5'-end 5'-phospho-2'-deoxyribonucleoside-DNA + H(+). It carries out the reaction a methylated nucleobase within DNA + 2-oxoglutarate + O2 = a nucleobase within DNA + formaldehyde + succinate + CO2. The enzyme catalyses an N(6)-methyl-2'-deoxyadenosine in DNA + 2-oxoglutarate + O2 = a 2'-deoxyadenosine in DNA + formaldehyde + succinate + CO2. It catalyses the reaction an N(1)-methyladenosine in tRNA + 2-oxoglutarate + O2 = an adenosine in tRNA + formaldehyde + succinate + CO2. The catalysed reaction is 5-methylcytidine(34) in mitochondrial tRNA(Met) + 2 2-oxoglutarate + 2 O2 = 5-formylcytidine(34) in mitochondrial tRNA(Met) + 2 succinate + 2 CO2 + H2O. It carries out the reaction an N(3)-methylcytidine in mRNA + 2-oxoglutarate + O2 = a cytidine in mRNA + formaldehyde + succinate + CO2. The enzyme catalyses N(1)-methyladenosine(58) in tRNA + 2-oxoglutarate + O2 = adenosine(58) in tRNA + formaldehyde + succinate + CO2. Functionally, dioxygenase that acts on nucleic acids, such as DNA and tRNA. Requires molecular oxygen, alpha-ketoglutarate and iron. A number of activities have been described for this dioxygenase, but recent results suggest that it mainly acts on tRNAs and mediates their demethylation or oxidation depending on the context and subcellular compartment. Mainly acts as a tRNA demethylase by removing N(1)-methyladenine from various tRNAs, with a preference for N(1)-methyladenine at position 58 (m1A58) present on a stem loop structure of tRNAs. Acts as a regulator of translation initiation and elongation in response to glucose deprivation: regulates both translation initiation, by mediating demethylation of tRNA(Met), and translation elongation, N(1)-methyladenine-containing tRNAs being preferentially recruited to polysomes to promote translation elongation. In mitochondrion, specifically interacts with mt-tRNA(Met) and mediates oxidation of mt-tRNA(Met) methylated at cytosine(34) to form 5-formylcytosine (f(5)c) at this position. mt-tRNA(Met) containing the f(5)c modification at the wobble position enables recognition of the AUA codon in addition to the AUG codon, expanding codon recognition in mitochondrial translation. Specifically demethylates DNA methylated on the 6th position of adenine (N(6)-methyladenosine) DNA. N(6)-methyladenosine (m6A) DNA is present at some L1 elements in embryonic stem cells and probably promotes their silencing. Demethylates mRNAs containing N(3)-methylcytidine modification. Also able to repair alkylated single-stranded DNA by oxidative demethylation, but with low activity. Also has DNA lyase activity and introduces double-stranded breaks at abasic sites: cleaves both single-stranded DNA and double-stranded DNA at abasic sites, with the greatest activity towards double-stranded DNA with two abasic sites. DNA lyase activity does not require alpha-ketoglutarate and iron and leads to the formation of an irreversible covalent protein-DNA adduct with the 5' DNA product. DNA lyase activity is not required during base excision repair and class switch recombination of the immunoglobulin heavy chain during B lymphocyte activation. May play a role in placental trophoblast lineage differentiation. This is Nucleic acid dioxygenase ALKBH1 from Homo sapiens (Human).